The following is a 552-amino-acid chain: uncharacterized protein (552 aa).

This sequence belongs to the transposase 25 family.

This is an uncharacterized protein from Sinorhizobium fredii (strain NBRC 101917 / NGR234).